Reading from the N-terminus, the 326-residue chain is Delta-aminolevulinic acid dehydratase (326 aa).

Zn(2+) is bound by residues C125, C127, and C135. Residue K200 is the Schiff-base intermediate with substrate of the active site. 5-aminolevulinate is bound by residues R210 and R222. Residue E238 coordinates Mg(2+). Residue K253 is the Schiff-base intermediate with substrate of the active site. S279 serves as a coordination point for 5-aminolevulinate.

Belongs to the ALAD family. As to quaternary structure, homooctamer. It depends on Zn(2+) as a cofactor.

It carries out the reaction 2 5-aminolevulinate = porphobilinogen + 2 H2O + H(+). It functions in the pathway porphyrin-containing compound metabolism; protoporphyrin-IX biosynthesis; coproporphyrinogen-III from 5-aminolevulinate: step 1/4. Functionally, catalyzes an early step in the biosynthesis of tetrapyrroles. Binds two molecules of 5-aminolevulinate per subunit, each at a distinct site, and catalyzes their condensation to form porphobilinogen. The chain is Delta-aminolevulinic acid dehydratase (hemB) from Methanothermobacter thermautotrophicus (strain ATCC 29096 / DSM 1053 / JCM 10044 / NBRC 100330 / Delta H) (Methanobacterium thermoautotrophicum).